Here is a 128-residue protein sequence, read N- to C-terminus: Small ribosomal subunit protein eS8 (128 aa).

The protein belongs to the eukaryotic ribosomal protein eS8 family. In terms of assembly, part of the 30S ribosomal subunit.

The protein is Small ribosomal subunit protein eS8 of Metallosphaera sedula (strain ATCC 51363 / DSM 5348 / JCM 9185 / NBRC 15509 / TH2).